The primary structure comprises 230 residues: Sugar fermentation stimulation protein homolog (230 aa).

The protein belongs to the SfsA family.

The protein is Sugar fermentation stimulation protein homolog of Clostridium kluyveri (strain NBRC 12016).